A 151-amino-acid polypeptide reads, in one-letter code: Aspartate carbamoyltransferase regulatory chain (151 aa).

Zn(2+)-binding residues include Cys-108, Cys-113, Cys-138, and Cys-141.

It belongs to the PyrI family. In terms of assembly, contains catalytic and regulatory chains. The cofactor is Zn(2+).

In terms of biological role, involved in allosteric regulation of aspartate carbamoyltransferase. The protein is Aspartate carbamoyltransferase regulatory chain of Pyrobaculum neutrophilum (strain DSM 2338 / JCM 9278 / NBRC 100436 / V24Sta) (Thermoproteus neutrophilus).